Reading from the N-terminus, the 109-residue chain is Nucleoid-associated protein CKO_02678 (109 aa).

A disordered region spans residues 89-109; sequence KEKMASVSSGMQLPPGFKMPF.

It belongs to the YbaB/EbfC family. As to quaternary structure, homodimer.

The protein resides in the cytoplasm. It localises to the nucleoid. Binds to DNA and alters its conformation. May be involved in regulation of gene expression, nucleoid organization and DNA protection. The sequence is that of Nucleoid-associated protein CKO_02678 from Citrobacter koseri (strain ATCC BAA-895 / CDC 4225-83 / SGSC4696).